Consider the following 430-residue polypeptide: MANVAIVGAQWGDEGKGKVVDIYTEYADDIVRFQGGNNAGHTLVVGNEKVVLHLIPSGILHEGKRCIIGNGVVLDPEVFIKEIVKLKESGRLTDDSCLLLSESLHIIMPYHKRIDIAREARSGDRKIGTTGRGIGPCYEDKIGRRGIRLMDLLNRDVFARRLKEFLVEKNFLLEKMLGEAPCDYDQILEEYSGYAEVLRAYMADTALIINNDLQAGKKILFEGAQGTLLDVDFGTYPFVTSSSTCAGGVCTGSGVGPRHIHEIIGISKAYVTRVGSGPFPTELFDADGDRLRDAGGEFGSTTGRPRRCGWFDAMVIRYAVRTNGLTGIALTKLDVLSGFDSIKICTGYTLDGKALETLPSAPEAFENCQPVYEELPGWNADISGAKSFEELPDSARAYVKRLEELAGCPIVLVSVGARRDQTIILRNPFL.

Residues 12–18 (GDEGKGK) and 40–42 (GHT) contribute to the GTP site. Asp-13 serves as the catalytic Proton acceptor. Residues Asp-13 and Gly-40 each contribute to the Mg(2+) site. Residues 13 to 16 (DEGK), 38 to 41 (NAGH), Thr-130, Arg-144, Gln-225, Thr-240, and Arg-304 contribute to the IMP site. The active-site Proton donor is the His-41. 300 to 306 (STTGRPR) contacts substrate. GTP-binding positions include Arg-306, 332–334 (KLD), and 414–416 (SVG).

It belongs to the adenylosuccinate synthetase family. As to quaternary structure, homodimer. The cofactor is Mg(2+).

The protein localises to the cytoplasm. It catalyses the reaction IMP + L-aspartate + GTP = N(6)-(1,2-dicarboxyethyl)-AMP + GDP + phosphate + 2 H(+). Its pathway is purine metabolism; AMP biosynthesis via de novo pathway; AMP from IMP: step 1/2. In terms of biological role, plays an important role in the de novo pathway of purine nucleotide biosynthesis. Catalyzes the first committed step in the biosynthesis of AMP from IMP. The protein is Adenylosuccinate synthetase of Pelobacter propionicus (strain DSM 2379 / NBRC 103807 / OttBd1).